The primary structure comprises 299 residues: 6-phosphogluconate dehydrogenase, NAD(+)-dependent, decarboxylating (299 aa).

NAD(+) is bound by residues 7–12, 67–69, and Asn95; these read GLGRMG and VPA. 3 residues coordinate substrate: Asn95, Ser118, and Gly120. Lys169 acts as the Proton acceptor in catalysis. 172-173 lines the substrate pocket; sequence HN. Residue Glu176 is the Proton donor of the active site. Substrate is bound by residues Tyr177 and Arg268.

This sequence belongs to the 6-phosphogluconate dehydrogenase family. Homotetramer.

The enzyme catalyses 6-phospho-D-gluconate + NAD(+) = D-ribulose 5-phosphate + CO2 + NADH. It participates in carbohydrate degradation; pentose phosphate pathway. Its function is as follows. Catalyzes the oxidative decarboxylation of 6-phosphogluconate to ribulose 5-phosphate and CO(2), with concomitant reduction of NAD to NADH. This chain is 6-phosphogluconate dehydrogenase, NAD(+)-dependent, decarboxylating, found in Haloferax volcanii (strain ATCC 29605 / DSM 3757 / JCM 8879 / NBRC 14742 / NCIMB 2012 / VKM B-1768 / DS2) (Halobacterium volcanii).